Here is a 454-residue protein sequence, read N- to C-terminus: DNA-binding protein (454 aa).

Residues 1 to 41 form a disordered region; that stretch reads MSHKKVVAISESSSDEEVPVAPPTAPPKKRQRKAVEEPRGH. Tyrosine 129 carries the phosphotyrosine; by host modification. Residues cysteine 213 and histidine 215 each contribute to the Zn(2+) site. Positions 226 to 260 are flexible loop; it reads VEMDVNSENAQRALKENPEKTKIVSNRWGRNVVQF. Positions 268, 284, 325, 327, 378, and 394 each coordinate Zn(2+). The interval 440-454 is C-terminal arm, DBP binding; the sequence is TILPQGQHDDDLVLF.

This sequence belongs to the adenoviridae E2A DNA-binding protein family. Homomultimerizes on viral ssDNA bound to pTP. Forms a initiation complex with viral polymerase, pTP and hosts NFIA and POU2F1/OCT1. Interacts with host SRCAP.

The protein localises to the host nucleus. Functionally, plays a role in the elongation phase of viral strand displacement replication by unwinding the template in an ATP-independent fashion, employing its capacity to form multimers. Also enhances the rate of initiation. Released from template upon second strand synthesis. Assembles in complex with viral pTP, viral pol, host NFIA and host POU2F1/OCT1 on viral origin of replication. Covers the whole ssDNA genome during synthesis. The complementary strand synthesis induces its relese from DNA template. May inhibit cellular transcription mediated by the interaction between host SRCAP and CBP. The polypeptide is DNA-binding protein (Canine adenovirus serotype 1 (strain CLL) (CAdV-1)).